Consider the following 236-residue polypeptide: Nopaline transport system permease protein NocQ (236 aa).

Residues 21–222 (AMMTVVVAAC…LLSSVSNRGF (202 aa)) form the ABC transmembrane type-1 domain. The next 4 membrane-spanning stretches (helical) occupy residues 25-45 (VVVA…FAAA), 63-83 (VVRG…GGTL), 102-122 (IFVI…TEVI), and 199-219 (QPFT…SVSN).

It belongs to the binding-protein-dependent transport system permease family. HisMQ subfamily.

It is found in the cell inner membrane. Functionally, component of the nopaline active transport system probably consisting of four subunits: Q, M, P and T. This system is also capable of transporting octopine provided that catabolic functions are induced with nopaline. The protein is Nopaline transport system permease protein NocQ (nocQ) of Agrobacterium fabrum (strain C58 / ATCC 33970) (Agrobacterium tumefaciens (strain C58)).